The sequence spans 196 residues: Imidazoleglycerol-phosphate dehydratase (196 aa).

This sequence belongs to the imidazoleglycerol-phosphate dehydratase family.

Its subcellular location is the cytoplasm. It carries out the reaction D-erythro-1-(imidazol-4-yl)glycerol 3-phosphate = 3-(imidazol-4-yl)-2-oxopropyl phosphate + H2O. It participates in amino-acid biosynthesis; L-histidine biosynthesis; L-histidine from 5-phospho-alpha-D-ribose 1-diphosphate: step 6/9. This is Imidazoleglycerol-phosphate dehydratase from Ralstonia pickettii (strain 12J).